The following is a 657-amino-acid chain: Glycogen debranching enzyme (657 aa).

Aspartate 336 functions as the Nucleophile in the catalytic mechanism. Residue glutamate 371 is the Proton donor of the active site. Basic and acidic residues predominate over residues 458–467 (NEANGEENRD). A disordered region spans residues 458–479 (NEANGEENRDGTNNNYSNNHGK).

Belongs to the glycosyl hydrolase 13 family.

The catalysed reaction is Hydrolysis of (1-&gt;6)-alpha-D-glucosidic linkages to branches with degrees of polymerization of three or four glucose residues in limit dextrin.. The protein operates within glycan degradation; glycogen degradation. Its function is as follows. Removes maltotriose and maltotetraose chains that are attached by 1,6-alpha-linkage to the limit dextrin main chain, generating a debranched limit dextrin. This is Glycogen debranching enzyme from Escherichia coli (strain SE11).